The following is a 212-amino-acid chain: Thymidine kinase (212 aa).

ATP-binding positions include 16 to 23 (GPMFSGKS) and 99 to 102 (DEAQ). Glu100 serves as the catalytic Proton acceptor.

The protein belongs to the thymidine kinase family. As to quaternary structure, homotetramer.

It localises to the cytoplasm. The enzyme catalyses thymidine + ATP = dTMP + ADP + H(+). The protein is Thymidine kinase of Deinococcus radiodurans (strain ATCC 13939 / DSM 20539 / JCM 16871 / CCUG 27074 / LMG 4051 / NBRC 15346 / NCIMB 9279 / VKM B-1422 / R1).